The sequence spans 123 residues: Small ribosomal subunit protein uS12 (123 aa).

A disordered region spans residues 1–27 (MPTIQQLIRKPRQPKIKRSKSMHLQEC). The segment covering 9–21 (RKPRQPKIKRSKS) has biased composition (basic residues). Position 89 is a 3-methylthioaspartic acid (D89).

It belongs to the universal ribosomal protein uS12 family. Part of the 30S ribosomal subunit. Contacts proteins S8 and S17. May interact with IF1 in the 30S initiation complex.

Functionally, with S4 and S5 plays an important role in translational accuracy. Interacts with and stabilizes bases of the 16S rRNA that are involved in tRNA selection in the A site and with the mRNA backbone. Located at the interface of the 30S and 50S subunits, it traverses the body of the 30S subunit contacting proteins on the other side and probably holding the rRNA structure together. The combined cluster of proteins S8, S12 and S17 appears to hold together the shoulder and platform of the 30S subunit. The sequence is that of Small ribosomal subunit protein uS12 from Roseobacter denitrificans (strain ATCC 33942 / OCh 114) (Erythrobacter sp. (strain OCh 114)).